The chain runs to 232 residues: 7-cyano-7-deazaguanine synthase (232 aa).

Residue 8–18 (FSGGQDSTTCL) coordinates ATP. The Zn(2+) site is built by Cys-187, Cys-196, Cys-199, and Cys-202.

It belongs to the QueC family. The cofactor is Zn(2+).

It catalyses the reaction 7-carboxy-7-deazaguanine + NH4(+) + ATP = 7-cyano-7-deazaguanine + ADP + phosphate + H2O + H(+). It functions in the pathway purine metabolism; 7-cyano-7-deazaguanine biosynthesis. Its function is as follows. Catalyzes the ATP-dependent conversion of 7-carboxy-7-deazaguanine (CDG) to 7-cyano-7-deazaguanine (preQ(0)). The protein is 7-cyano-7-deazaguanine synthase of Photobacterium profundum (strain SS9).